A 269-amino-acid chain; its full sequence is Peptide deformylase 1A, chloroplastic/mitochondrial (269 aa).

The transit peptide at 1–60 directs the protein to the chloroplast and mitochondrion; sequence MGLHRDEATAMETLFRVSLRLLPVSAAVTCRSIRFPVSRPGSSHLLNRKLYNLPTSSSSS. Substrate-binding positions include 123–126 and glycine 187; that span reads PGVG. A Zn(2+)-binding site is contributed by cysteine 188. A dimerization region spans residues 191–196; that stretch reads VDGFRA. Histidine 230 provides a ligand contact to Zn(2+). Residue glutamate 231 is part of the active site. Histidine 234 serves as a coordination point for Zn(2+). The tract at residues 236 to 254 is dimerization; sequence DGNLYVDKMVPRTFRTVDN.

Belongs to the polypeptide deformylase family. As to quaternary structure, homodimer. Zn(2+) serves as cofactor. As to expression, expressed in roots, leaves, flowers and siliques.

The protein localises to the plastid. It is found in the chloroplast stroma. Its subcellular location is the mitochondrion. It catalyses the reaction N-terminal N-formyl-L-methionyl-[peptide] + H2O = N-terminal L-methionyl-[peptide] + formate. Inhibited by actinonin. Functionally, removes the formyl group from the N-terminal Met of newly synthesized proteins. The chain is Peptide deformylase 1A, chloroplastic/mitochondrial (PDF1A) from Arabidopsis thaliana (Mouse-ear cress).